The sequence spans 349 residues: MPMSRPDSAVSLLPDYSLRAHNTFGFDARARVAARIGSPGQFASLARDPRVAGLDRLVLGGGSNVVFTRDFDGLVLLDEIRGRALVREDDGAWYVEAGGGENWHAFVEWTLAEGMPGLENLALIPGTVGAAPIQNIGAYGLEMKEHFASLRAVELATGELVEFDAARCAFGYRDSFFKRDGRGRFAIVAVTFRLPKAWTPRIGYADVARELAARGIDARAVRARDVFDAVVAIRRAKLPDPLALGNAGSFFKNPVIDAQAFAALRAREPDIVSYPQPDGRVKLAAGWLIDRCGWKGRALGAAAVHERQALVLVNLGGASGADVLALAHAIRRDVLGRFGVELEMEPVCL.

An FAD-binding PCMH-type domain is found at 26-197 (FDARARVAAR…VAVTFRLPKA (172 aa)). Residue R173 is part of the active site. S249 serves as the catalytic Proton donor. E345 is an active-site residue.

It belongs to the MurB family. It depends on FAD as a cofactor.

The protein localises to the cytoplasm. It catalyses the reaction UDP-N-acetyl-alpha-D-muramate + NADP(+) = UDP-N-acetyl-3-O-(1-carboxyvinyl)-alpha-D-glucosamine + NADPH + H(+). The protein operates within cell wall biogenesis; peptidoglycan biosynthesis. In terms of biological role, cell wall formation. The chain is UDP-N-acetylenolpyruvoylglucosamine reductase from Burkholderia pseudomallei (strain 1710b).